The sequence spans 101 residues: MEDMITLTDERKTVKFENLPEIYVRVHDEAKGLVLTVKNPYDTDVYAKVYYAPDGENYDTVTSEVVKYDYQAQKTELIPIKHPYMKISFDSAVSGWVSYIK.

This is an uncharacterized protein from Methanocaldococcus jannaschii (strain ATCC 43067 / DSM 2661 / JAL-1 / JCM 10045 / NBRC 100440) (Methanococcus jannaschii).